A 116-amino-acid chain; its full sequence is Protein Rev (116 aa).

Phosphoserine; by host CK2 occurs at positions 5 and 8. Positions 18-26 (LIKFLYQSN) are homomultimerization. The segment at 23–49 (YQSNPPPNPEGTRQARRNRRRRWRERQ) is disordered. The Nuclear localization signal and RNA-binding (RRE) signature appears at 34-50 (TRQARRNRRRRWRERQR). Residues 36 to 47 (QARRNRRRRWRE) show a composition bias toward basic residues. The Nuclear export signal and binding to XPO1 motif lies at 73 to 84 (LQLPPLERLTLD). A phosphoserine; by host mark is found at serine 92 and serine 99.

Belongs to the HIV-1 REV protein family. Homomultimer; when bound to the RRE. Multimeric assembly is essential for activity and may involve XPO1. Binds to human KPNB1, XPO1, TNPO1, RANBP5 and IPO7. Interacts with the viral Integrase. Interacts with human KHDRBS1. Interacts with human NAP1; this interaction decreases Rev multimerization and stimulates its activity. Interacts with human DEAD-box helicases DDX3 and DDX24; these interactions may serve for viral RNA export to the cytoplasm and packaging, respectively. Interacts with human PSIP1; this interaction may inhibit HIV-1 DNA integration by promoting dissociation of the Integrase-LEDGF/p75 complex. Post-translationally, asymmetrically arginine dimethylated at one site by host PRMT6. Methylation impairs the RNA-binding activity and export of viral RNA from the nucleus to the cytoplasm. Phosphorylated by protein kinase CK2. Presence of, and maybe binding to the N-terminus of the regulatory beta subunit of CK2 is necessary for CK2-mediated Rev's phosphorylation.

It localises to the host nucleus. It is found in the host nucleolus. Its subcellular location is the host cytoplasm. Functionally, escorts unspliced or incompletely spliced viral pre-mRNAs (late transcripts) out of the nucleus of infected cells. These pre-mRNAs carry a recognition sequence called Rev responsive element (RRE) located in the env gene, that is not present in fully spliced viral mRNAs (early transcripts). This function is essential since most viral proteins are translated from unspliced or partially spliced pre-mRNAs which cannot exit the nucleus by the pathway used by fully processed cellular mRNAs. Rev itself is translated from a fully spliced mRNA that readily exits the nucleus. Rev's nuclear localization signal (NLS) binds directly to KPNB1/Importin beta-1 without previous binding to KPNA1/Importin alpha-1. KPNB1 binds to the GDP bound form of RAN (Ran-GDP) and targets Rev to the nucleus. In the nucleus, the conversion from Ran-GDP to Ran-GTP dissociates Rev from KPNB1 and allows Rev's binding to the RRE in viral pre-mRNAs. Rev multimerization on the RRE via cooperative assembly exposes its nuclear export signal (NES) to the surface. Rev can then form a complex with XPO1/CRM1 and Ran-GTP, leading to nuclear export of the complex. Conversion from Ran-GTP to Ran-GDP mediates dissociation of the Rev/RRE/XPO1/RAN complex, so that Rev can return to the nucleus for a subsequent round of export. Beside KPNB1, also seems to interact with TNPO1/Transportin-1, RANBP5/IPO5 and IPO7/RANBP7 for nuclear import. The nucleoporin-like HRB/RIP is an essential cofactor that probably indirectly interacts with Rev to release HIV RNAs from the perinuclear region to the cytoplasm. This chain is Protein Rev, found in Human immunodeficiency virus type 1 group M subtype B (isolate HXB3) (HIV-1).